Reading from the N-terminus, the 197-residue chain is MYAYLKGIITKITAKYIVLETNGIGYILHVANPYAYSGQVNQEDQIYVHQVVREDAHLLYGFRSEDEKKLFLSLISVSGIGPVSALAIIAADDNAGLVQAIETKNITYLTKFPKIGKKTAQQMVLDLEGKVVVAGDDLPAKIAVQASAENQELEEAMEAMLALGYKATELKKIKKFFEGTTDTAENYIKSALKMLVK.

A domain I region spans residues 1-63; the sequence is MYAYLKGIIT…EDAHLLYGFR (63 aa). A domain II region spans residues 64 to 142; it reads SEDEKKLFLS…VAGDDLPAKI (79 aa). The segment at 143–147 is flexible linker; it reads AVQAS. The segment at 148-197 is domain III; the sequence is AENQELEEAMEAMLALGYKATELKKIKKFFEGTTDTAENYIKSALKMLVK.

This sequence belongs to the RuvA family. As to quaternary structure, homotetramer. Forms an RuvA(8)-RuvB(12)-Holliday junction (HJ) complex. HJ DNA is sandwiched between 2 RuvA tetramers; dsDNA enters through RuvA and exits via RuvB. An RuvB hexamer assembles on each DNA strand where it exits the tetramer. Each RuvB hexamer is contacted by two RuvA subunits (via domain III) on 2 adjacent RuvB subunits; this complex drives branch migration. In the full resolvosome a probable DNA-RuvA(4)-RuvB(12)-RuvC(2) complex forms which resolves the HJ.

Its subcellular location is the cytoplasm. The RuvA-RuvB-RuvC complex processes Holliday junction (HJ) DNA during genetic recombination and DNA repair, while the RuvA-RuvB complex plays an important role in the rescue of blocked DNA replication forks via replication fork reversal (RFR). RuvA specifically binds to HJ cruciform DNA, conferring on it an open structure. The RuvB hexamer acts as an ATP-dependent pump, pulling dsDNA into and through the RuvAB complex. HJ branch migration allows RuvC to scan DNA until it finds its consensus sequence, where it cleaves and resolves the cruciform DNA. This Streptococcus pneumoniae (strain Taiwan19F-14) protein is Holliday junction branch migration complex subunit RuvA.